A 202-amino-acid chain; its full sequence is Adenylyl-sulfate kinase (202 aa).

31-38 (GLSASGKS) provides a ligand contact to ATP. Ser-105 serves as the catalytic Phosphoserine intermediate.

The protein belongs to the APS kinase family.

It carries out the reaction adenosine 5'-phosphosulfate + ATP = 3'-phosphoadenylyl sulfate + ADP + H(+). It participates in sulfur metabolism; hydrogen sulfide biosynthesis; sulfite from sulfate: step 2/3. In terms of biological role, catalyzes the synthesis of activated sulfate. The chain is Adenylyl-sulfate kinase (MET14) from Saccharomyces cerevisiae (strain ATCC 204508 / S288c) (Baker's yeast).